The chain runs to 333 residues: MGDWGFLEKLLDQVQEHSTVVGKIWLTVLFIFRILILGLAGESVWGDEQSDFECNTAQPGCTNVCYDQAFPISHIRYWVLQFLFVSTPTLVYLGHVIYLSRREERLRQKEGELRALPAKDPQVERALAAVERQMAKISVAEDGRLRIRGALMGTYVASVLCKSVLEAGFLYGQWRLYGWTMEPVFVCQRAPCPYLVDCFVSRPTEKTIFIIFMLVVGLISLVLNLLELVHLLCRCLSRGMRARQGQDAPPTQGTSSDPYTDQVFFYLPVGQGPSSPPCPTYNGLSSSEQNWANLTTEERLASSRPPLFLDPPPQNGQKPPSRPSSSASKKQYV.

The Cytoplasmic portion of the chain corresponds to 1–20 (MGDWGFLEKLLDQVQEHSTV). The chain crosses the membrane as a helical span at residues 21-40 (VGKIWLTVLFIFRILILGLA). Topologically, residues 41-76 (GESVWGDEQSDFECNTAQPGCTNVCYDQAFPISHIR) are extracellular. Residues 77 to 99 (YWVLQFLFVSTPTLVYLGHVIYL) traverse the membrane as a helical segment. The Cytoplasmic portion of the chain corresponds to 100 to 148 (SRREERLRQKEGELRALPAKDPQVERALAAVERQMAKISVAEDGRLRIR). Residues 149-165 (GALMGTYVASVLCKSVL) traverse the membrane as a helical segment. Topologically, residues 166–207 (EAGFLYGQWRLYGWTMEPVFVCQRAPCPYLVDCFVSRPTEKT) are extracellular. The helical transmembrane segment at 208-230 (IFIIFMLVVGLISLVLNLLELVH) threads the bilayer. Over 231–333 (LLCRCLSRGM…SSSASKKQYV (103 aa)) the chain is Cytoplasmic. Positions 292 to 333 (ANLTTEERLASSRPPLFLDPPPQNGQKPPSRPSSSASKKQYV) are disordered. Low complexity predominate over residues 323–333 (PSSSASKKQYV).

It belongs to the connexin family. Alpha-type (group II) subfamily. In terms of assembly, a connexon is composed of a hexamer of connexins. In terms of tissue distribution, expressed in multiple organs and tissues, including heart, uterus, ovary, and blood vessel endothelium.

The protein localises to the cell membrane. It localises to the cell junction. Its subcellular location is the gap junction. In terms of biological role, one gap junction consists of a cluster of closely packed pairs of transmembrane channels, the connexons, through which materials of low MW diffuse from one cell to a neighboring cell. In Homo sapiens (Human), this protein is Gap junction alpha-4 protein (GJA4).